A 303-amino-acid polypeptide reads, in one-letter code: Probable cell division protein WhiA (303 aa).

The H-T-H motif DNA-binding region spans S272 to L303.

Belongs to the WhiA family.

In terms of biological role, involved in cell division and chromosome segregation. This chain is Probable cell division protein WhiA, found in Streptococcus pyogenes serotype M1.